Here is a 740-residue protein sequence, read N- to C-terminus: Arf-GAP with coiled-coil, ANK repeat and PH domain-containing protein 1 (740 aa).

Residues 1–226 (MTVKLDFEEC…RKELGAQLHQ (226 aa)) form the BAR domain. Residues 1-382 (MTVKLDFEEC…RGPGQGSGHL (382 aa)) form a required for formation of endosomal tubules when overexpressed with PIP5K1C region. In terms of domain architecture, PH spans 265–360 (GLVMEGHLFK…WVSAVQSSIA (96 aa)). An Arf-GAP domain is found at 405 to 527 (GHVVAQVQSV…KFLTKLPEIR (123 aa)). A required for interaction with GULP1 region spans residues 405 to 740 (GHVVAQVQSV…SRRSHDLHTL (336 aa)). A C4-type zinc finger spans residues 420-443 (CCDCREPAPEWASINLGVTLCIQC). The residue at position 485 (Y485) is a 3'-nitrotyrosine. The interval 525–566 (EIRGRRGGRGRPRGQPPVPPKPSIRPRPGSLRSKPEPPSEDL) is prevents interaction with ITGB1 when S-554 is not phosphorylated. The interval 525–581 (EIRGRRGGRGRPRGQPPVPPKPSIRPRPGSLRSKPEPPSEDLGSLHPGALLFRASGH) is disordered. The span at 538-549 (GQPPVPPKPSIR) shows a compositional bias: pro residues. At S554 the chain carries Phosphoserine; by PKB. 3 ANK repeats span residues 606–635 (DNATPLIQATAANSLLACEFLLQNGANVNQ), 639–668 (AGRGPLHHATILGHTGLACLFLKRGADLGA), and 672–702 (EGRDPLTIAMETANADIVTLLRLAKMREAEA).

In terms of assembly, banana-shaped homodimer laterally assembling into tetramers, the tetramers further pack helically onto the membrane. Interacts with GTP-bound ARF6. Interacts with third cytoplasmic loop of SLC2A4/GLUT4. Interacts with CLTC. Interacts with GULP1. Forms a complex with GDP-bound ARF6 and GULP1. Interacts with ITGB1; required for ITGB1 recycling. Phosphorylation at Ser-554 by PKB is required for interaction with ITGB1, export of ITGB1 from recycling endosomes to the cell surface and ITGB1-dependent cell migration. In terms of tissue distribution, highest level in lung and spleen. Low level in heart, kidney, liver and pancreas.

It is found in the recycling endosome membrane. GAP activity stimulated by phosphatidylinositol 4,5-bisphosphate (PIP2) and phosphatidic acid. GTPase-activating protein (GAP) for ADP ribosylation factor 6 (ARF6) required for clathrin-dependent export of proteins from recycling endosomes to trans-Golgi network and cell surface. Required for regulated export of ITGB1 from recycling endosomes to the cell surface and ITGB1-dependent cell migration. The protein is Arf-GAP with coiled-coil, ANK repeat and PH domain-containing protein 1 (ACAP1) of Homo sapiens (Human).